Here is a 369-residue protein sequence, read N- to C-terminus: Deacetylase EF_0837 (369 aa).

The Zn(2+) site is built by His58, His60, Lys152, His186, His209, and Asp270. At Lys152 the chain carries N6-carboxylysine.

This sequence belongs to the metallo-dependent hydrolases superfamily. Atu3266/EF_0837 deacetylase family. It depends on Zn(2+) as a cofactor.

Functionally, esterase that can catalyze the deacetylation of acetyl-(R)-mandelate, but with very low efficiency (in vitro). The polypeptide is Deacetylase EF_0837 (Enterococcus faecalis (strain ATCC 700802 / V583)).